Reading from the N-terminus, the 364-residue chain is F-box/kelch-repeat protein At3g23880 (364 aa).

An F-box domain is found at 8-54 (MFSPHNLPLEMMEEILLRLPVKSLTRFKCVCSSWRSLISETLFALKH). Kelch repeat units lie at residues 169 to 215 (DYKV…SRSG) and 216 to 265 (IYIN…TLGD).

This is F-box/kelch-repeat protein At3g23880 from Arabidopsis thaliana (Mouse-ear cress).